Here is a 279-residue protein sequence, read N- to C-terminus: NAD-dependent protein deacylase (279 aa).

Residues 20 to 272 enclose the Deacetylase sirtuin-type domain; that stretch reads RERLRQRIFF…PEFVEKLLKG (253 aa). Residue 48-67 participates in NAD(+) binding; sequence GAGISAESGIRTFRAADGLW. Substrate-binding residues include Tyr-92 and Arg-95. 129–132 contributes to the NAD(+) binding site; sequence QNID. The Proton acceptor role is filled by His-147. Cys-155 and Cys-174 together coordinate Zn(2+). NAD(+) is bound by residues 214 to 216, 240 to 242, and Ala-258; these read GTS and NLE.

This sequence belongs to the sirtuin family. Class III subfamily. As to quaternary structure, forms a 1:1 complex with acetyl-CoA synthetase (Acs). It depends on Zn(2+) as a cofactor.

It localises to the cytoplasm. It catalyses the reaction N(6)-acetyl-L-lysyl-[protein] + NAD(+) + H2O = 2''-O-acetyl-ADP-D-ribose + nicotinamide + L-lysyl-[protein]. The enzyme catalyses N(6)-succinyl-L-lysyl-[protein] + NAD(+) + H2O = 2''-O-succinyl-ADP-D-ribose + nicotinamide + L-lysyl-[protein]. It carries out the reaction N(6)-(2-hydroxyisobutanoyl)-L-lysyl-[protein] + NAD(+) + H2O = 2''-O-(2-hydroxyisobutanoyl)-ADP-D-ribose + nicotinamide + L-lysyl-[protein]. Deacetylation is inhibited by nicotinamide. Functionally, NAD-dependent lysine deacetylase that specifically removes acetyl groups on target proteins. Also acts as a protein-lysine deacylase by mediating protein desuccinylation and de-2-hydroxyisobutyrylation. Modulates the activities of several proteins which are inactive in their acylated form. Activates the enzyme acetyl-CoA synthetase (acs) by deacetylating 'Lys-609' in the inactive, acetylated form of the enzyme. May also modulate the activity of other propionyl-adenosine monophosphate (AMP)-forming enzymes. This chain is NAD-dependent protein deacylase, found in Escherichia coli (strain K12).